The chain runs to 245 residues: 14-3-3 protein zeta (245 aa).

Belongs to the 14-3-3 family. As to quaternary structure, homodimer.

The protein localises to the cytoplasm. Functionally, adapter protein implicated in the regulation of a large spectrum of both general and specialized signaling pathways. Binds to a large number of partners, usually by recognition of a phosphoserine or phosphothreonine motif. Binding generally results in the modulation of the activity of the binding partner. In Xenopus tropicalis (Western clawed frog), this protein is 14-3-3 protein zeta (ywhaz).